The chain runs to 928 residues: Isoleucine--tRNA ligase (928 aa).

The 'HIGH' region motif lies at 57-67; sequence PFANGNIHMGH. Glu552 serves as a coordination point for L-isoleucyl-5'-AMP. The 'KMSKS' region motif lies at 593 to 597; the sequence is KMSKS. Lys596 contacts ATP. Cys887, Cys890, Cys907, and Cys910 together coordinate Zn(2+).

It belongs to the class-I aminoacyl-tRNA synthetase family. IleS type 1 subfamily. As to quaternary structure, monomer. The cofactor is Zn(2+).

It localises to the cytoplasm. The catalysed reaction is tRNA(Ile) + L-isoleucine + ATP = L-isoleucyl-tRNA(Ile) + AMP + diphosphate. Functionally, catalyzes the attachment of isoleucine to tRNA(Ile). As IleRS can inadvertently accommodate and process structurally similar amino acids such as valine, to avoid such errors it has two additional distinct tRNA(Ile)-dependent editing activities. One activity is designated as 'pretransfer' editing and involves the hydrolysis of activated Val-AMP. The other activity is designated 'posttransfer' editing and involves deacylation of mischarged Val-tRNA(Ile). This chain is Isoleucine--tRNA ligase, found in Latilactobacillus sakei subsp. sakei (strain 23K) (Lactobacillus sakei subsp. sakei).